Consider the following 170-residue polypeptide: Ribosome maturation factor RimM (170 aa).

Residues 97–170 (NADEYYWVDL…LVVVDWDPEF (74 aa)) enclose the PRC barrel domain.

The protein belongs to the RimM family. Binds ribosomal protein uS19.

It is found in the cytoplasm. Its function is as follows. An accessory protein needed during the final step in the assembly of 30S ribosomal subunit, possibly for assembly of the head region. Essential for efficient processing of 16S rRNA. May be needed both before and after RbfA during the maturation of 16S rRNA. It has affinity for free ribosomal 30S subunits but not for 70S ribosomes. The protein is Ribosome maturation factor RimM of Stenotrophomonas maltophilia (strain R551-3).